We begin with the raw amino-acid sequence, 101 residues long: Small ribosomal subunit protein uS10 (101 aa).

This sequence belongs to the universal ribosomal protein uS10 family. In terms of assembly, part of the 30S ribosomal subunit.

Its function is as follows. Involved in the binding of tRNA to the ribosomes. This Phocaeicola vulgatus (strain ATCC 8482 / DSM 1447 / JCM 5826 / CCUG 4940 / NBRC 14291 / NCTC 11154) (Bacteroides vulgatus) protein is Small ribosomal subunit protein uS10.